The primary structure comprises 39 residues: Photosystem II reaction center protein L (39 aa).

Residues 16 to 37 traverse the membrane as a helical segment; that stretch reads RTSLYLGLLLVAVLGILFSSYF.

The protein belongs to the PsbL family. PSII is composed of 1 copy each of membrane proteins PsbA, PsbB, PsbC, PsbD, PsbE, PsbF, PsbH, PsbI, PsbJ, PsbK, PsbL, PsbM, PsbT, PsbX, PsbY, PsbZ, Psb30/Ycf12, peripheral proteins PsbO, CyanoQ (PsbQ), PsbU, PsbV and a large number of cofactors. It forms dimeric complexes.

Its subcellular location is the cellular thylakoid membrane. In terms of biological role, one of the components of the core complex of photosystem II (PSII). PSII is a light-driven water:plastoquinone oxidoreductase that uses light energy to abstract electrons from H(2)O, generating O(2) and a proton gradient subsequently used for ATP formation. It consists of a core antenna complex that captures photons, and an electron transfer chain that converts photonic excitation into a charge separation. This subunit is found at the monomer-monomer interface and is required for correct PSII assembly and/or dimerization. Required for PSII activity, at least in part due to its effects on PSII assembly. May make specific contact(s) with lipids. The chain is Photosystem II reaction center protein L from Synechocystis sp. (strain ATCC 27184 / PCC 6803 / Kazusa).